The chain runs to 111 residues: UPF0145 protein BTH_I2656 (111 aa).

Belongs to the UPF0145 family.

This is UPF0145 protein BTH_I2656 from Burkholderia thailandensis (strain ATCC 700388 / DSM 13276 / CCUG 48851 / CIP 106301 / E264).